Consider the following 270-residue polypeptide: Formamidopyrimidine-DNA glycosylase (270 aa).

Catalysis depends on P2, which acts as the Schiff-base intermediate with DNA. The Proton donor role is filled by E3. K57 functions as the Proton donor; for beta-elimination activity in the catalytic mechanism. Residues H90, R109, and K150 each contribute to the DNA site. An FPG-type zinc finger spans residues 235–269 (LVYGNKDKPCPRCGTKIKSIIIGQRNSFFCPQCQK). R259 functions as the Proton donor; for delta-elimination activity in the catalytic mechanism.

Belongs to the FPG family. In terms of assembly, monomer. It depends on Zn(2+) as a cofactor.

It carries out the reaction Hydrolysis of DNA containing ring-opened 7-methylguanine residues, releasing 2,6-diamino-4-hydroxy-5-(N-methyl)formamidopyrimidine.. The catalysed reaction is 2'-deoxyribonucleotide-(2'-deoxyribose 5'-phosphate)-2'-deoxyribonucleotide-DNA = a 3'-end 2'-deoxyribonucleotide-(2,3-dehydro-2,3-deoxyribose 5'-phosphate)-DNA + a 5'-end 5'-phospho-2'-deoxyribonucleoside-DNA + H(+). Involved in base excision repair of DNA damaged by oxidation or by mutagenic agents. Acts as a DNA glycosylase that recognizes and removes damaged bases. Has a preference for oxidized purines, such as 7,8-dihydro-8-oxoguanine (8-oxoG). Has AP (apurinic/apyrimidinic) lyase activity and introduces nicks in the DNA strand. Cleaves the DNA backbone by beta-delta elimination to generate a single-strand break at the site of the removed base with both 3'- and 5'-phosphates. This is Formamidopyrimidine-DNA glycosylase from Histophilus somni (strain 2336) (Haemophilus somnus).